The primary structure comprises 455 residues: Probable glycine dehydrogenase (decarboxylating) subunit 1 (455 aa).

The protein belongs to the GcvP family. N-terminal subunit subfamily. The glycine cleavage system is composed of four proteins: P, T, L and H. In this organism, the P 'protein' is a heterodimer of two subunits.

The catalysed reaction is N(6)-[(R)-lipoyl]-L-lysyl-[glycine-cleavage complex H protein] + glycine + H(+) = N(6)-[(R)-S(8)-aminomethyldihydrolipoyl]-L-lysyl-[glycine-cleavage complex H protein] + CO2. Functionally, the glycine cleavage system catalyzes the degradation of glycine. The P protein binds the alpha-amino group of glycine through its pyridoxal phosphate cofactor; CO(2) is released and the remaining methylamine moiety is then transferred to the lipoamide cofactor of the H protein. This chain is Probable glycine dehydrogenase (decarboxylating) subunit 1, found in Francisella tularensis subsp. holarctica (strain FTNF002-00 / FTA).